A 96-amino-acid polypeptide reads, in one-letter code: Co-chaperonin GroES (96 aa).

The protein belongs to the GroES chaperonin family. In terms of assembly, heptamer of 7 subunits arranged in a ring. Interacts with the chaperonin GroEL.

It is found in the cytoplasm. Together with the chaperonin GroEL, plays an essential role in assisting protein folding. The GroEL-GroES system forms a nano-cage that allows encapsulation of the non-native substrate proteins and provides a physical environment optimized to promote and accelerate protein folding. GroES binds to the apical surface of the GroEL ring, thereby capping the opening of the GroEL channel. The polypeptide is Co-chaperonin GroES (Ralstonia nicotianae (strain ATCC BAA-1114 / GMI1000) (Ralstonia solanacearum)).